The sequence spans 405 residues: Imidazolonepropionase (405 aa).

The Fe(3+) site is built by His-73 and His-75. Zn(2+) is bound by residues His-73 and His-75. The 4-imidazolone-5-propanoate site is built by Arg-82, Tyr-145, and His-178. Tyr-145 provides a ligand contact to N-formimidoyl-L-glutamate. His-243 serves as a coordination point for Fe(3+). A Zn(2+)-binding site is contributed by His-243. Residue Gln-246 coordinates 4-imidazolone-5-propanoate. Fe(3+) is bound at residue Asp-318. Asp-318 provides a ligand contact to Zn(2+). Residues Asn-320 and Gly-322 each coordinate N-formimidoyl-L-glutamate. Residue Thr-323 coordinates 4-imidazolone-5-propanoate.

This sequence belongs to the metallo-dependent hydrolases superfamily. HutI family. It depends on Zn(2+) as a cofactor. The cofactor is Fe(3+).

It localises to the cytoplasm. The enzyme catalyses 4-imidazolone-5-propanoate + H2O = N-formimidoyl-L-glutamate. Its pathway is amino-acid degradation; L-histidine degradation into L-glutamate; N-formimidoyl-L-glutamate from L-histidine: step 3/3. Its function is as follows. Catalyzes the hydrolytic cleavage of the carbon-nitrogen bond in imidazolone-5-propanoate to yield N-formimidoyl-L-glutamate. It is the third step in the universal histidine degradation pathway. This Brucella anthropi (strain ATCC 49188 / DSM 6882 / CCUG 24695 / JCM 21032 / LMG 3331 / NBRC 15819 / NCTC 12168 / Alc 37) (Ochrobactrum anthropi) protein is Imidazolonepropionase.